Reading from the N-terminus, the 248-residue chain is Triosephosphate isomerase (248 aa).

D-glyceraldehyde 3-phosphate contacts are provided by N10 and K12. The active-site Electrophile is the H95. The active-site Proton acceptor is E165. D-glyceraldehyde 3-phosphate-binding positions include G171, L230, and 232-233 (GN).

It belongs to the triosephosphate isomerase family. As to quaternary structure, homodimer.

It carries out the reaction D-glyceraldehyde 3-phosphate = dihydroxyacetone phosphate. It functions in the pathway carbohydrate biosynthesis; gluconeogenesis. It participates in carbohydrate degradation; glycolysis; D-glyceraldehyde 3-phosphate from glycerone phosphate: step 1/1. Catalyzes the interconversion of glyceraldehyde 3-phosphate and dihydroxyacetone phosphate in the glycolytic and gluconeogenic pathways. The sequence is that of Triosephosphate isomerase from Plasmodium falciparum (isolate 3D7).